The chain runs to 336 residues: MSRPSLTRFLIEEQHAGRIDAELRQLITIVSRACKRISIAVSKGALGGVLGDAGTGNVQGEAQKKLDVLSNDILLEANAWGGHLAACASEEMDHSQPVPEQYPSGDFLLLFDPLDGSSNIDVNVSVGTIFSVLRAPKGTEKPGDEHFLQPGTQQVAAGYCIYGPSTMLVLTLGHGTHAFTLEREEGSFLLTQANMRVPDETAEYAINMSNQRHWEPAMQAYVGDLLAGKDGARGKDFNMRWIASMVADVHRILTRGGIFIYPWDKKDPSKPGKLRLMYEANPMSMLVEQAGGAATTGRERILDIQPTQLHQRVPVFLGSKNEVAAATRYHLDADKA.

Residues glutamate 90, aspartate 112, leucine 114, and aspartate 115 each contribute to the Mg(2+) site. Substrate is bound by residues 115–118 (DGSS), asparagine 207, and lysine 273. Glutamate 279 serves as a coordination point for Mg(2+).

The protein belongs to the FBPase class 1 family. Homotetramer. Mg(2+) is required as a cofactor.

The protein resides in the cytoplasm. It catalyses the reaction beta-D-fructose 1,6-bisphosphate + H2O = beta-D-fructose 6-phosphate + phosphate. The protein operates within carbohydrate biosynthesis; gluconeogenesis. The sequence is that of Fructose-1,6-bisphosphatase class 1 from Xanthomonas oryzae pv. oryzae (strain PXO99A).